A 229-amino-acid polypeptide reads, in one-letter code: Urease accessory protein UreG (229 aa).

Residue 24 to 31 (GPVGSGKT) participates in GTP binding.

This sequence belongs to the SIMIBI class G3E GTPase family. UreG subfamily. As to quaternary structure, homodimer. UreD, UreF and UreG form a complex that acts as a GTP-hydrolysis-dependent molecular chaperone, activating the urease apoprotein by helping to assemble the nickel containing metallocenter of UreC. The UreE protein probably delivers the nickel.

It localises to the cytoplasm. In terms of biological role, facilitates the functional incorporation of the urease nickel metallocenter. This process requires GTP hydrolysis, probably effectuated by UreG. This chain is Urease accessory protein UreG, found in Albidiferax ferrireducens (strain ATCC BAA-621 / DSM 15236 / T118) (Rhodoferax ferrireducens).